The chain runs to 258 residues: 1-(5-phosphoribosyl)-5-[(5-phosphoribosylamino)methylideneamino] imidazole-4-carboxamide isomerase 2 (258 aa).

Asp14 acts as the Proton acceptor in catalysis. Asp140 functions as the Proton donor in the catalytic mechanism.

It belongs to the HisA/HisF family.

The protein localises to the cytoplasm. The catalysed reaction is 1-(5-phospho-beta-D-ribosyl)-5-[(5-phospho-beta-D-ribosylamino)methylideneamino]imidazole-4-carboxamide = 5-[(5-phospho-1-deoxy-D-ribulos-1-ylimino)methylamino]-1-(5-phospho-beta-D-ribosyl)imidazole-4-carboxamide. It functions in the pathway amino-acid biosynthesis; L-histidine biosynthesis; L-histidine from 5-phospho-alpha-D-ribose 1-diphosphate: step 4/9. This is 1-(5-phosphoribosyl)-5-[(5-phosphoribosylamino)methylideneamino] imidazole-4-carboxamide isomerase 2 (hisA2) from Photorhabdus laumondii subsp. laumondii (strain DSM 15139 / CIP 105565 / TT01) (Photorhabdus luminescens subsp. laumondii).